The sequence spans 360 residues: Protein phosphatase 1L (360 aa).

Residues 1-25 (MIEDTMTLLSLLGRIMRYFLLRPET) lie on the Extracellular side of the membrane. A helical membrane pass occupies residues 26 to 42 (LFLLCISLALWSYFFHT). The Cytoplasmic segment spans residues 43 to 360 (DEVKTIVKSS…FRNSSKTEEH (318 aa)). The PPM-type phosphatase domain maps to 92–351 (NVAVYSIQGR…DNITVMVVKF (260 aa)). Positions 128, 129, 302, and 342 each coordinate Mn(2+).

This sequence belongs to the PP2C family. As to quaternary structure, interacts with MAP3K7/TAK1 and MAP3K5. It depends on Mg(2+) as a cofactor. Requires Mn(2+) as cofactor. As to expression, expressed in brain, heart, testis, liver, lung and skeletal muscle.

The protein localises to the membrane. The enzyme catalyses O-phospho-L-seryl-[protein] + H2O = L-seryl-[protein] + phosphate. It catalyses the reaction O-phospho-L-threonyl-[protein] + H2O = L-threonyl-[protein] + phosphate. Acts as a suppressor of the SAPK signaling pathways by associating with and dephosphorylating MAP3K7/TAK1 and MAP3K5, and by attenuating the association between MAP3K7/TAK1 and MAP2K4 or MAP2K6. This Mus musculus (Mouse) protein is Protein phosphatase 1L (Ppm1l).